The chain runs to 313 residues: Biotin synthase (313 aa).

The 231-residue stretch at 28-258 (NFGNDIELCS…LFPQARLRLS (231 aa)) folds into the Radical SAM core domain. [4Fe-4S] cluster contacts are provided by Cys46, Cys50, and Cys53. [2Fe-2S] cluster contacts are provided by Cys90, Cys121, Cys181, and Arg256.

It belongs to the radical SAM superfamily. Biotin synthase family. Homodimer. [4Fe-4S] cluster is required as a cofactor. The cofactor is [2Fe-2S] cluster.

The enzyme catalyses (4R,5S)-dethiobiotin + (sulfur carrier)-SH + 2 reduced [2Fe-2S]-[ferredoxin] + 2 S-adenosyl-L-methionine = (sulfur carrier)-H + biotin + 2 5'-deoxyadenosine + 2 L-methionine + 2 oxidized [2Fe-2S]-[ferredoxin]. The protein operates within cofactor biosynthesis; biotin biosynthesis; biotin from 7,8-diaminononanoate: step 2/2. Catalyzes the conversion of dethiobiotin (DTB) to biotin by the insertion of a sulfur atom into dethiobiotin via a radical-based mechanism. The protein is Biotin synthase of Francisella tularensis subsp. tularensis (strain WY96-3418).